We begin with the raw amino-acid sequence, 384 residues long: Brix domain-containing protein F44G4.1 (384 aa).

2 disordered regions span residues 1-58 (MAPK…KVVK) and 82-135 (SKAT…PQKE). Positions 18 to 48 (FVEEEVTGDVDEDGFEQAEDMPDEVDSDEDE) are enriched in acidic residues. Positions 96 to 114 (LPKSQRGKALKRALRKDKR) are enriched in basic residues. Residues 115-127 (ARQGERAQIRDEL) show a composition bias toward basic and acidic residues. One can recognise a Brix domain in the interval 177–360 (PKVMITMTPK…LKWLQKGTFD (184 aa)).

The chain is Brix domain-containing protein F44G4.1 from Caenorhabditis elegans.